A 200-amino-acid chain; its full sequence is NADH-quinone oxidoreductase subunit B (200 aa).

[4Fe-4S] cluster contacts are provided by cysteine 78, cysteine 79, cysteine 144, and cysteine 174.

This sequence belongs to the complex I 20 kDa subunit family. In terms of assembly, NDH-1 is composed of 14 different subunits. Subunits NuoB, C, D, E, F, and G constitute the peripheral sector of the complex. Requires [4Fe-4S] cluster as cofactor.

It localises to the cell membrane. The catalysed reaction is a quinone + NADH + 5 H(+)(in) = a quinol + NAD(+) + 4 H(+)(out). Its function is as follows. NDH-1 shuttles electrons from NADH, via FMN and iron-sulfur (Fe-S) centers, to quinones in the respiratory chain. The immediate electron acceptor for the enzyme in this species is believed to be ubiquinone. Couples the redox reaction to proton translocation (for every two electrons transferred, four hydrogen ions are translocated across the cytoplasmic membrane), and thus conserves the redox energy in a proton gradient. The polypeptide is NADH-quinone oxidoreductase subunit B (Dehalococcoides mccartyi (strain ATCC BAA-2100 / JCM 16839 / KCTC 5957 / BAV1)).